A 121-amino-acid chain; its full sequence is Acid shock protein (121 aa).

The N-terminal stretch at 1–21 is a signal peptide; it reads MKKVLALMVAATLGLSSVAFA. Positions 22–63 are excised as a propeptide; sequence ADTTATATPAATSTTATVAAQTKATQHQKHKVTKKTTEQKAQ. Residues 40–121 are disordered; it reads AAQTKATQHQ…AKKPVAAPAA (82 aa). A compositionally biased stretch (low complexity) spans 74 to 83; the sequence is VQKAPVQKAQ. The segment covering 84-93 has biased composition (basic residues); it reads AAKKHVKKAS. Residues 94–103 are compositionally biased toward low complexity; it reads VQKAPVQKAQ. Positions 104–113 are enriched in basic residues; it reads AAKKHHKTAK.

The protein belongs to the Asr family. Post-translationally, proteolytic processing gives rise to the active protein.

It localises to the periplasm. Required for growth and/or survival at acidic conditions. In Yersinia pseudotuberculosis serotype O:1b (strain IP 31758), this protein is Acid shock protein.